The chain runs to 515 residues: Protein DETOXIFICATION 32 (515 aa).

A compositionally biased stretch (basic and acidic residues) spans 1–26 (METLNVDHEDTISSEQEHRAHTKSDT). Residues 1–30 (METLNVDHEDTISSEQEHRAHTKSDTDMPP) are disordered. The next 12 membrane-spanning stretches (helical) occupy residues 48 to 68 (LWWL…LGAV), 90 to 110 (VISG…ATLC), 131 to 151 (IILN…TPLL), 167 to 187 (FSLW…TAKF), 194 to 214 (VIAM…LSWL), 225 to 245 (GGAV…IVYI), 276 to 296 (AVMV…AGYL), 303 to 323 (VAAL…AFGF), 347 to 367 (LIVA…TLIV), 392 to 412 (LLAL…VAVG), 418 to 438 (IVAY…GLVL), and 448 to 468 (GIWT…LFII). A compositionally biased stretch (basic and acidic residues) spans 488–497 (GDQSNKREEI). A disordered region spans residues 488–515 (GDQSNKREEIDLCEEDENNSNGENNHRK). Positions 506 to 515 (NSNGENNHRK) are enriched in low complexity.

This sequence belongs to the multi antimicrobial extrusion (MATE) (TC 2.A.66.1) family.

The protein localises to the membrane. This is Protein DETOXIFICATION 32 from Arabidopsis thaliana (Mouse-ear cress).